Reading from the N-terminus, the 318-residue chain is Ubiquinol oxidase (318 aa).

A helical transmembrane segment spans residues 150–170 (VVVLETVAAIPGMVGGMFRHL). Fe cation-binding residues include Glu-154, Glu-193, and His-196. The chain crosses the membrane as a helical span at residues 212-232 (MLIKLGQFLFFNGYMVFYFVA). Residues Glu-244, Glu-295, and His-298 each contribute to the Fe cation site.

It belongs to the alternative oxidase family. In terms of assembly, found as monomers and homodimers. Fe cation serves as cofactor.

The protein localises to the mitosome membrane. It catalyses the reaction 2 a ubiquinol + O2 = 2 a ubiquinone + 2 H2O. Alternative oxidase which function may be to reoxidize reducing equivalents produced by glycolysis such as ubiquinol. This is Ubiquinol oxidase (AOX) from Trachipleistophora hominis (Microsporidian parasite).